The chain runs to 353 residues: MEKVKVIIMGLGAMGGGMADMLLKKQGVEIVGVVGRGKMLGTSMYDHISTPRGDREDVIVGAMEDVITEKAADVVLLCTDSFTRKAFDKIKFIVEKKINVISSAEEMAYPMAQEPELAKEIDRLAKENGVSVLGTGINPGLIMDLLVILMTGCCEEVHSILSRRVNSLSPFGPAVMEEQGIGITVEEFNKGVQEGTLAGHVGFHESIGMIADAIGWKLSAPITQSMEPIVTDVDRKSPYGFAKAGNVAGCAMKGFGYVDGELKIEMDHPQQIEPEQVGVQTGDYVIINGVPNINMVNSPEVPGGIGTIAMCVNMIPQIINARPGLHTMIDLPVPRAIMGDFRDLISEEAKIVK.

This sequence belongs to the DapB family. As to quaternary structure, homodimer.

It carries out the reaction (2R,4S)-2,4-diaminopentanoate + NAD(+) + H2O = (2R)-2-amino-4-oxopentanoate + NH4(+) + NADH + H(+). The catalysed reaction is (2R,4S)-2,4-diaminopentanoate + NADP(+) + H2O = (2R)-2-amino-4-oxopentanoate + NH4(+) + NADPH + H(+). Inhibited by p-chloromercuribenzoate, iodoacetate and N-ethylmaleimide. Functionally, involved in the ornithine fermentation pathway. Catalyzes the oxidative deamination of (2R,4S)-2,4-diaminopentanoate (DAP) to yield 2-amino-4-ketopentanoate (AKP). The sequence is that of 2,4-diaminopentanoate dehydrogenase from Acetoanaerobium sticklandii (strain ATCC 12662 / DSM 519 / JCM 1433 / CCUG 9281 / NCIMB 10654 / HF) (Clostridium sticklandii).